A 476-amino-acid polypeptide reads, in one-letter code: BTB/POZ domain-containing protein KCTD8 (476 aa).

Residues 44–122 (EVVELNVGGQ…LRDKQLALPE (79 aa)) enclose the BTB domain. Ser78 carries the phosphoserine modification. An Omega-N-methylarginine modification is found at Arg80. A disordered region spans residues 331-412 (SPKQEHEDRK…WMPPPDKRRN (82 aa)). A compositionally biased stretch (basic and acidic residues) spans 333 to 349 (KQEHEDRKRDKVTDKGS). Residues 350-391 (ESGTSCNELSTSSCDSHSEASTPQDNPANTQQAAAHQPNTLT) are compositionally biased toward polar residues. Residue Ser413 is modified to Phosphoserine.

Interacts as a tetramer with GABBR1 and GABBR2.

It is found in the presynaptic cell membrane. The protein resides in the postsynaptic cell membrane. Auxiliary subunit of GABA-B receptors that determine the pharmacology and kinetics of the receptor response. Increases agonist potency and markedly alter the G-protein signaling of the receptors by accelerating onset and promoting desensitization. The chain is BTB/POZ domain-containing protein KCTD8 (Kctd8) from Mus musculus (Mouse).